A 779-amino-acid polypeptide reads, in one-letter code: Ribosome-releasing factor 2, mitochondrial (779 aa).

Residues 68–353 (AKIRNIGIMA…AVTTYLPSPE (286 aa)) enclose the tr-type G domain. GTP-binding positions include 77-84 (AHIDAGKT), 141-145 (DTPGH), and 195-198 (NKMD).

The protein belongs to the TRAFAC class translation factor GTPase superfamily. Classic translation factor GTPase family. EF-G/EF-2 subfamily.

Its subcellular location is the mitochondrion. It catalyses the reaction GTP + H2O = GDP + phosphate + H(+). Mitochondrial GTPase that mediates the disassembly of ribosomes from messenger RNA at the termination of mitochondrial protein biosynthesis. Acts in collaboration with MRRF. GTP hydrolysis follows the ribosome disassembly and probably occurs on the ribosome large subunit. Not involved in the GTP-dependent ribosomal translocation step during translation elongation. The sequence is that of Ribosome-releasing factor 2, mitochondrial (Gfm2) from Rattus norvegicus (Rat).